The following is a 508-amino-acid chain: ATP synthase subunit alpha (508 aa).

Residue 171–178 coordinates ATP; it reads GDRQTGKT.

The protein belongs to the ATPase alpha/beta chains family. In terms of assembly, F-type ATPases have 2 components, CF(1) - the catalytic core - and CF(0) - the membrane proton channel. CF(1) has five subunits: alpha(3), beta(3), gamma(1), delta(1), epsilon(1). CF(0) has three main subunits: a(1), b(2) and c(9-12). The alpha and beta chains form an alternating ring which encloses part of the gamma chain. CF(1) is attached to CF(0) by a central stalk formed by the gamma and epsilon chains, while a peripheral stalk is formed by the delta and b chains.

The protein resides in the cell membrane. The enzyme catalyses ATP + H2O + 4 H(+)(in) = ADP + phosphate + 5 H(+)(out). Its function is as follows. Produces ATP from ADP in the presence of a proton gradient across the membrane. The alpha chain is a regulatory subunit. This is ATP synthase subunit alpha from Protochlamydia amoebophila (strain UWE25).